Consider the following 200-residue polypeptide: Charged multivesicular body protein 6-A (200 aa).

Glycine 2 carries N-myristoyl glycine lipidation. Residues 9-102 are a coiled coil; the sequence is RRSRVTEQDK…FAQIEMKVIE (94 aa). Positions 166–200 are disordered; that stretch reads EDLELPEAPSEPLPDTIPEKQAVKNKPKPQMIAAS. Positions 168–179 match the Type-2 MIT-interacting motif motif; it reads LELPEAPSEPLP.

It belongs to the SNF7 family. Probable core component of the endosomal sorting required for transport complex III (ESCRT-III). ESCRT-III components are thought to multimerize to form a flat lattice on the perimeter membrane of the endosome.

The protein localises to the endomembrane system. The protein resides in the late endosome membrane. Its function is as follows. Probable core component of the endosomal sorting required for transport complex III (ESCRT-III) which is involved in multivesicular bodies (MVBs) formation and sorting of endosomal cargo proteins into MVBs. MVBs contain intraluminal vesicles (ILVs) that are generated by invagination and scission from the limiting membrane of the endosome and mostly are delivered to lysosomes enabling degradation of membrane proteins, such as stimulated growth factor receptors, lysosomal enzymes and lipids. In the ESCRT-III complex, it probably serves as an acceptor for the ESCRT-II complex on endosomal membranes. The protein is Charged multivesicular body protein 6-A (chmp6-a) of Xenopus laevis (African clawed frog).